A 484-amino-acid polypeptide reads, in one-letter code: Glutamate--tRNA ligase (484 aa).

The 'HIGH' region signature appears at 11-21 (PSPTGYLHIGN). The 'KMSKS' region motif lies at 252–256 (KLSKR). An ATP-binding site is contributed by Lys255.

The protein belongs to the class-I aminoacyl-tRNA synthetase family. Glutamate--tRNA ligase type 1 subfamily. As to quaternary structure, monomer.

The protein localises to the cytoplasm. It carries out the reaction tRNA(Glu) + L-glutamate + ATP = L-glutamyl-tRNA(Glu) + AMP + diphosphate. Functionally, catalyzes the attachment of glutamate to tRNA(Glu) in a two-step reaction: glutamate is first activated by ATP to form Glu-AMP and then transferred to the acceptor end of tRNA(Glu). In Staphylococcus saprophyticus subsp. saprophyticus (strain ATCC 15305 / DSM 20229 / NCIMB 8711 / NCTC 7292 / S-41), this protein is Glutamate--tRNA ligase.